Reading from the N-terminus, the 225-residue chain is Imidazole glycerol phosphate synthase subunit HisH (225 aa).

A Glutamine amidotransferase type-1 domain is found at 3–225; sequence TIAIVDYGMG…LYRNFVDWQP (223 aa). Residue Cys82 is the Nucleophile of the active site. Active-site residues include His205 and Glu207.

Heterodimer of HisH and HisF.

The protein resides in the cytoplasm. It catalyses the reaction 5-[(5-phospho-1-deoxy-D-ribulos-1-ylimino)methylamino]-1-(5-phospho-beta-D-ribosyl)imidazole-4-carboxamide + L-glutamine = D-erythro-1-(imidazol-4-yl)glycerol 3-phosphate + 5-amino-1-(5-phospho-beta-D-ribosyl)imidazole-4-carboxamide + L-glutamate + H(+). The catalysed reaction is L-glutamine + H2O = L-glutamate + NH4(+). It functions in the pathway amino-acid biosynthesis; L-histidine biosynthesis; L-histidine from 5-phospho-alpha-D-ribose 1-diphosphate: step 5/9. Functionally, IGPS catalyzes the conversion of PRFAR and glutamine to IGP, AICAR and glutamate. The HisH subunit catalyzes the hydrolysis of glutamine to glutamate and ammonia as part of the synthesis of IGP and AICAR. The resulting ammonia molecule is channeled to the active site of HisF. In Bordetella bronchiseptica (strain ATCC BAA-588 / NCTC 13252 / RB50) (Alcaligenes bronchisepticus), this protein is Imidazole glycerol phosphate synthase subunit HisH.